We begin with the raw amino-acid sequence, 182 residues long: Acireductone dioxygenase (182 aa).

Histidine 100, histidine 102, glutamate 106, and histidine 145 together coordinate Fe(2+). Ni(2+)-binding residues include histidine 100, histidine 102, glutamate 106, and histidine 145.

Belongs to the acireductone dioxygenase (ARD) family. In terms of assembly, monomer. Fe(2+) serves as cofactor. It depends on Ni(2+) as a cofactor.

It carries out the reaction 1,2-dihydroxy-5-(methylsulfanyl)pent-1-en-3-one + O2 = 3-(methylsulfanyl)propanoate + CO + formate + 2 H(+). The enzyme catalyses 1,2-dihydroxy-5-(methylsulfanyl)pent-1-en-3-one + O2 = 4-methylsulfanyl-2-oxobutanoate + formate + 2 H(+). It functions in the pathway amino-acid biosynthesis; L-methionine biosynthesis via salvage pathway; L-methionine from S-methyl-5-thio-alpha-D-ribose 1-phosphate: step 5/6. Functionally, catalyzes 2 different reactions between oxygen and the acireductone 1,2-dihydroxy-3-keto-5-methylthiopentene (DHK-MTPene) depending upon the metal bound in the active site. Fe-containing acireductone dioxygenase (Fe-ARD) produces formate and 2-keto-4-methylthiobutyrate (KMTB), the alpha-ketoacid precursor of methionine in the methionine recycle pathway. Ni-containing acireductone dioxygenase (Ni-ARD) produces methylthiopropionate, carbon monoxide and formate, and does not lie on the methionine recycle pathway. In Trichormus variabilis (strain ATCC 29413 / PCC 7937) (Anabaena variabilis), this protein is Acireductone dioxygenase.